The primary structure comprises 43 residues: Hainantoxin F5-22.36 (43 aa).

3 cysteine pairs are disulfide-bonded: Cys-1/Cys-19, Cys-8/Cys-24, and Cys-18/Cys-38.

Belongs to the neurotoxin 14 (magi-1) family. 02 (HWTX-XVIc) subfamily. Expressed by the venom gland.

It localises to the secreted. Functionally, probable ion channel inhibitor. In Cyriopagopus hainanus (Chinese bird spider), this protein is Hainantoxin F5-22.36.